The sequence spans 203 residues: Large ribosomal subunit protein bL25 (203 aa).

The protein belongs to the bacterial ribosomal protein bL25 family. CTC subfamily. In terms of assembly, part of the 50S ribosomal subunit; part of the 5S rRNA/L5/L18/L25 subcomplex. Contacts the 5S rRNA. Binds to the 5S rRNA independently of L5 and L18.

Its function is as follows. This is one of the proteins that binds to the 5S RNA in the ribosome where it forms part of the central protuberance. This Cereibacter sphaeroides (strain ATCC 17029 / ATH 2.4.9) (Rhodobacter sphaeroides) protein is Large ribosomal subunit protein bL25.